The primary structure comprises 272 residues: Cytosolic Fe-S cluster assembly factor NUBP2 (272 aa).

23-30 (GKGGVGKS) lines the ATP pocket. [4Fe-4S] cluster-binding residues include C197 and C200.

This sequence belongs to the Mrp/NBP35 ATP-binding proteins family. NUBP2/CFD1 subfamily. As to quaternary structure, heterotetramer of 2 NUBP1 and 2 NUBP2 chains. It depends on [4Fe-4S] cluster as a cofactor.

The protein localises to the cytoplasm. In terms of biological role, component of the cytosolic iron-sulfur (Fe/S) protein assembly (CIA) machinery. Required for maturation of extramitochondrial Fe-S proteins. The NUBP1-NUBP2 heterotetramer forms a Fe-S scaffold complex, mediating the de novo assembly of an Fe-S cluster and its transfer to target apoproteins. This is Cytosolic Fe-S cluster assembly factor NUBP2 from Gallus gallus (Chicken).